The primary structure comprises 460 residues: tRNA modification GTPase MnmE (460 aa).

3 residues coordinate (6S)-5-formyl-5,6,7,8-tetrahydrofolate: arginine 24, glutamate 81, and lysine 121. In terms of domain architecture, TrmE-type G spans 218-384; the sequence is GLVVAIAGPP…MVEALAGFAA (167 aa). Residues 228-233, 247-253, and 272-275 contribute to the GTP site; these read NVGKST, SPHAGTT, and DTAG. The Mg(2+) site is built by serine 232 and threonine 253. Lysine 460 contributes to the (6S)-5-formyl-5,6,7,8-tetrahydrofolate binding site.

Belongs to the TRAFAC class TrmE-Era-EngA-EngB-Septin-like GTPase superfamily. TrmE GTPase family. Homodimer. Heterotetramer of two MnmE and two MnmG subunits. It depends on K(+) as a cofactor.

The protein resides in the cytoplasm. In terms of biological role, exhibits a very high intrinsic GTPase hydrolysis rate. Involved in the addition of a carboxymethylaminomethyl (cmnm) group at the wobble position (U34) of certain tRNAs, forming tRNA-cmnm(5)s(2)U34. This is tRNA modification GTPase MnmE from Rhodopseudomonas palustris (strain HaA2).